Consider the following 275-residue polypeptide: Formamidopyrimidine-DNA glycosylase (275 aa).

Proline 2 serves as the catalytic Schiff-base intermediate with DNA. Catalysis depends on glutamate 3, which acts as the Proton donor. Lysine 58 serves as the catalytic Proton donor; for beta-elimination activity. DNA-binding residues include histidine 91, arginine 109, and arginine 154. The FPG-type zinc-finger motif lies at 240–274 (AVYERAGLPCRVCGTPIRRLVQGQRATYYCPSCQK). Arginine 264 (proton donor; for delta-elimination activity) is an active-site residue.

Belongs to the FPG family. In terms of assembly, monomer. Zn(2+) serves as cofactor.

It catalyses the reaction Hydrolysis of DNA containing ring-opened 7-methylguanine residues, releasing 2,6-diamino-4-hydroxy-5-(N-methyl)formamidopyrimidine.. The enzyme catalyses 2'-deoxyribonucleotide-(2'-deoxyribose 5'-phosphate)-2'-deoxyribonucleotide-DNA = a 3'-end 2'-deoxyribonucleotide-(2,3-dehydro-2,3-deoxyribose 5'-phosphate)-DNA + a 5'-end 5'-phospho-2'-deoxyribonucleoside-DNA + H(+). Involved in base excision repair of DNA damaged by oxidation or by mutagenic agents. Acts as a DNA glycosylase that recognizes and removes damaged bases. Has a preference for oxidized purines, such as 7,8-dihydro-8-oxoguanine (8-oxoG). Has AP (apurinic/apyrimidinic) lyase activity and introduces nicks in the DNA strand. Cleaves the DNA backbone by beta-delta elimination to generate a single-strand break at the site of the removed base with both 3'- and 5'-phosphates. The sequence is that of Formamidopyrimidine-DNA glycosylase from Bordetella petrii (strain ATCC BAA-461 / DSM 12804 / CCUG 43448).